Here is a 115-residue protein sequence, read N- to C-terminus: Protein E6A (115 aa).

The N-terminal stretch at 1–25 is a signal peptide; it reads MTDKFYFYGLFWGILLFVFLQHMQG.

This is Protein E6A (12) from Equine herpesvirus 2 (strain 86/87) (EHV-2).